A 1143-amino-acid chain; its full sequence is Disease resistance protein Pikm1-TS (1143 aa).

Residues 1 to 190 (MEAAAMAVTA…PLRIMGGEMQ (190 aa)) are structured coiled coil (CC) domain. One can recognise an HMA domain in the interval 189–258 (MQKIVFKIPM…KVGPAMFLEV (70 aa)). Positions 191–264 (KIVFKIPMVD…FLEVSQVKED (74 aa)) are HMA-like domain. The NB-ARC domain maps to 282-570 (HEVKTICILG…WIAEGFVSEE (289 aa)). LRR repeat units follow at residues 681–706 (FKRL…ICEQ), 708–731 (SLRV…MRKL), 732–754 (KHLE…IGEL), 756–777 (HLRI…IREL), 778–800 (QHLH…VGKL), 802–823 (NLKI…IGEL), 824–848 (NHLQ…QISQ), 945–968 (MPNL…INGT), 979–1002 (DSRV…EFKF), and 1004–1027 (AGPA…VFRC).

Belongs to the disease resistance NB-LRR family. As to quaternary structure, interacts with AVR-Pik through its N-terminal part containing the HMA-like domain. In terms of tissue distribution, constitutively expressed.

In terms of biological role, disease resistance (R) protein that specifically recognizes the AVR-Pik effector avirulence protein from M.oryzae. Resistance proteins guard the plant against pathogens that contain an appropriate avirulence protein via an indirect interaction with this avirulence protein. That triggers a defense system including the hypersensitive response, which restricts the pathogen growth. Contribution of Pikm-2 is required to recognize the effector avirulence protein AVR-Pik. In Oryza sativa subsp. japonica (Rice), this protein is Disease resistance protein Pikm1-TS.